The chain runs to 896 residues: NEDD4-binding protein 1 (896 aa).

The KH-like domain maps to 59–143 (QEAVHSAKEY…IQQFVKLFEN (85 aa)). The residue at position 226 (Ser-226) is a Phosphoserine. Thr-242 carries the phosphothreonine modification. Residues Ser-258 and Ser-300 each carry the phosphoserine modification. Disordered stretches follow at residues 403–430 (YPET…PKKT) and 488–507 (ETDG…VNFV). Residues 414-430 (VYSSTNELTTDSTPKKT) show a composition bias toward polar residues. Position 562 is a phosphoserine (Ser-562). The 153-residue stretch at 617–769 (LKHIVIDGSN…LGRSGPRLEE (153 aa)) folds into the RNase NYN domain. The interval 801–821 (GTQAASTSHQPPTRIQGAPSS) is disordered. The span at 803–813 (QAASTSHQPPT) shows a compositional bias: polar residues. The tract at residues 849–896 (RSSAETNELREALLKIFPDSEQRLKIDQILVAHPYMKDLNALSAMVLD) is coCUN.

Belongs to the N4BP1 family. Interacts with NEDD4. Interacts with ITCH (via WW domain 2). In terms of processing, proteolytically cleaved by CASP8 downstream of TLR3 or TLR4, leading to its inactivation. Mainly cleaved at Asp-490 by CASP8. Cleaved by caspase-like protein MALT1 in T-cells following TCR-mediated activation, leading to its inactivation and subsequent viral reactivation during HIV-1 infection. Post-translationally, mono- and polyubiquitinated on the CoCUN region. Monoubiquitinated by NEDD4. Polyubiquitinated, leading to its degradation by the proteasome. Sumoylated with SUMO1, abrogating polyubiquitination and subsequent degradation. Desumoylated by SENP1, leading to accumulation in PML nuclear bodies. In terms of tissue distribution, detected in heart, lung, brain, liver, skeletal muscle, pancreas, kidney, spleen, testis and ovary.

It is found in the cytoplasm. It localises to the cytosol. The protein resides in the nucleus. Its subcellular location is the nucleolus. The protein localises to the PML body. With respect to regulation, proteolytic cleavage by CASP8 or MALT1 leads to its inactivation. Functionally, potent suppressor of cytokine production that acts as a regulator of innate immune signaling and inflammation. Acts as a key negative regulator of select cytokine and chemokine responses elicited by TRIF-independent Toll-like receptors (TLRs), thereby limiting inflammatory cytokine responses to minor insults. In response to more threatening pathogens, cleaved by CASP8 downstream of TLR3 or TLR4, leading to its inactivation, thereby allowing production of inflammatory cytokines. Acts as a restriction factor against some viruses, such as HIV-1: restricts HIV-1 replication by binding to HIV-1 mRNAs and mediating their degradation via its ribonuclease activity. Also acts as an inhibitor of the E3 ubiquitin-protein ligase ITCH: acts by interacting with the second WW domain of ITCH, leading to compete with ITCH's substrates and impairing ubiquitination of substrates. This chain is NEDD4-binding protein 1, found in Homo sapiens (Human).